A 194-amino-acid chain; its full sequence is MPILAQAVLASHNAGKVKEFQGWLQPWIGELVALPAAIEIAETADSFVANACLKAATAAKVMGEWAIADDSGLAVHALQGAPGIYSARYGATDAERIERLLREMADVSDRAAEFICVIALARPDGTIAVTTEGRCAGEILTAPRGQGGFGYDPVFWVPSQQRTFAEMSPVEKQQVSHRGQALQRLREYFQTLNP.

11-16 (SHNAGK) lines the substrate pocket. D70 functions as the Proton acceptor in the catalytic mechanism. D70 lines the Mg(2+) pocket. Residues S71, 149–152 (FGYD), K172, and 177–178 (HR) each bind substrate.

Belongs to the HAM1 NTPase family. Homodimer. Requires Mg(2+) as cofactor.

It catalyses the reaction XTP + H2O = XMP + diphosphate + H(+). The enzyme catalyses dITP + H2O = dIMP + diphosphate + H(+). It carries out the reaction ITP + H2O = IMP + diphosphate + H(+). In terms of biological role, pyrophosphatase that catalyzes the hydrolysis of nucleoside triphosphates to their monophosphate derivatives, with a high preference for the non-canonical purine nucleotides XTP (xanthosine triphosphate), dITP (deoxyinosine triphosphate) and ITP. Seems to function as a house-cleaning enzyme that removes non-canonical purine nucleotides from the nucleotide pool, thus preventing their incorporation into DNA/RNA and avoiding chromosomal lesions. The sequence is that of dITP/XTP pyrophosphatase from Thermosynechococcus vestitus (strain NIES-2133 / IAM M-273 / BP-1).